The primary structure comprises 518 residues: MNEFWQHCSALLERELTPQQYVTWIKPLAPVAFDADANTLSIAAPNRFKLDWVKSQFSGRITDLARDFWHSPVDVQFVLDPKAGMRTAPAAPSRPPSAGVRNAAAAVDAAVGAVQAAHSARGGGMPGLGMPTNAAQLTDDAADLDLPSLDANEAAAARRTWRPGAAAQAAGGESDSTYERSKLNPVLTFDNFVTGKANQLARAAAIQVADNPGISYNPLFLYGGVGLGKTHLIHAIGNQLLMDKPGARIRYIHAEQYVSDVVKAYQRKAFDDFKRYYHSLDLLLIDDIQFFSGKSRTQEEFFYAFEALVANKAQVIITSDTYPKEISGIDDRLISRFDSGLTVAIEPPELEMRVAILMRKAQSEGVNLNEDVAFFVAKHLRSNVRELEGALRKILAYSKFHGREITIELTKEALKDLLTVQNRQISVENIQKTVADFYSIKVADMYSKKRPANIARPRQIAMYLAKELTQKSLPEIGELFGGRDHTTVLHAVRKIADERGKDAQLNHELHVLEQTLKG.

A domain I, interacts with DnaA modulators region spans residues 1 to 72 (MNEFWQHCSA…DLARDFWHSP (72 aa)). The segment at 72–181 (PVDVQFVLDP…GESDSTYERS (110 aa)) is domain II. The segment at 155–178 (AAARRTWRPGAAAQAAGGESDSTY) is disordered. The tract at residues 182-398 (KLNPVLTFDN…GALRKILAYS (217 aa)) is domain III, AAA+ region. The ATP site is built by G226, G228, K229, and T230. Positions 399–518 (KFHGREITIE…LHVLEQTLKG (120 aa)) are domain IV, binds dsDNA.

It belongs to the DnaA family. Oligomerizes as a right-handed, spiral filament on DNA at oriC.

It is found in the cytoplasm. Its function is as follows. Plays an essential role in the initiation and regulation of chromosomal replication. ATP-DnaA binds to the origin of replication (oriC) to initiate formation of the DNA replication initiation complex once per cell cycle. Binds the DnaA box (a 9 base pair repeat at the origin) and separates the double-stranded (ds)DNA. Forms a right-handed helical filament on oriC DNA; dsDNA binds to the exterior of the filament while single-stranded (ss)DNA is stabiized in the filament's interior. The ATP-DnaA-oriC complex binds and stabilizes one strand of the AT-rich DNA unwinding element (DUE), permitting loading of DNA polymerase. After initiation quickly degrades to an ADP-DnaA complex that is not apt for DNA replication. Binds acidic phospholipids. The sequence is that of Chromosomal replication initiator protein DnaA from Paraburkholderia phymatum (strain DSM 17167 / CIP 108236 / LMG 21445 / STM815) (Burkholderia phymatum).